Here is a 261-residue protein sequence, read N- to C-terminus: 1-(5-phosphoribosyl)-5-[(5-phosphoribosylamino)methylideneamino] imidazole-4-carboxamide isomerase (261 aa).

Asp-15 acts as the Proton acceptor in catalysis. Asp-136 serves as the catalytic Proton donor.

It belongs to the HisA/HisF family.

Its subcellular location is the cytoplasm. The enzyme catalyses 1-(5-phospho-beta-D-ribosyl)-5-[(5-phospho-beta-D-ribosylamino)methylideneamino]imidazole-4-carboxamide = 5-[(5-phospho-1-deoxy-D-ribulos-1-ylimino)methylamino]-1-(5-phospho-beta-D-ribosyl)imidazole-4-carboxamide. It participates in amino-acid biosynthesis; L-histidine biosynthesis; L-histidine from 5-phospho-alpha-D-ribose 1-diphosphate: step 4/9. This is 1-(5-phosphoribosyl)-5-[(5-phosphoribosylamino)methylideneamino] imidazole-4-carboxamide isomerase from Synechococcus sp. (strain JA-2-3B'a(2-13)) (Cyanobacteria bacterium Yellowstone B-Prime).